The following is a 26-amino-acid chain: Hemocyanin subunit 5 (26 aa).

It belongs to the tyrosinase family. Hemocyanin subfamily. As to expression, hemolymph.

Its subcellular location is the secreted. It localises to the extracellular space. In terms of biological role, hemocyanins are copper-containing oxygen carriers occurring freely dissolved in the hemolymph of many mollusks and arthropods. This chain is Hemocyanin subunit 5, found in Maja squinado (Mediterranean spider crab).